A 256-amino-acid chain; its full sequence is Small ribosomal subunit protein eS1 (256 aa).

Residues 1 to 18 (MAVGKNKRLSKGKKGVKK) show a composition bias toward basic residues. A disordered region spans residues 1–20 (MAVGKNKRLSKGKKGVKKRT). Residue Ala2 is modified to N-acetylalanine; partial.

The protein belongs to the eukaryotic ribosomal protein eS1 family. In terms of assembly, component of the small ribosomal subunit. Mature ribosomes consist of a small (40S) and a large (60S) subunit. The 40S subunit contains about 33 different proteins and 1 molecule of RNA (18S). The 60S subunit contains about 49 different proteins and 3 molecules of RNA (25S, 5.8S and 5S).

It is found in the cytoplasm. This chain is Small ribosomal subunit protein eS1 (rps1), found in Aspergillus clavatus (strain ATCC 1007 / CBS 513.65 / DSM 816 / NCTC 3887 / NRRL 1 / QM 1276 / 107).